Reading from the N-terminus, the 387-residue chain is 3-ketoacyl-CoA thiolase (387 aa).

The active-site Acyl-thioester intermediate is the cysteine 91. Catalysis depends on proton acceptor residues histidine 343 and cysteine 373.

It belongs to the thiolase-like superfamily. Thiolase family. As to quaternary structure, heterotetramer of two alpha chains (FadB) and two beta chains (FadA).

It is found in the cytoplasm. The enzyme catalyses an acyl-CoA + acetyl-CoA = a 3-oxoacyl-CoA + CoA. It participates in lipid metabolism; fatty acid beta-oxidation. In terms of biological role, catalyzes the final step of fatty acid oxidation in which acetyl-CoA is released and the CoA ester of a fatty acid two carbons shorter is formed. The sequence is that of 3-ketoacyl-CoA thiolase from Shewanella sp. (strain ANA-3).